Consider the following 637-residue polypeptide: ATP-dependent zinc metalloprotease FtsH (637 aa).

At 1 to 44 the chain is on the cytoplasmic side; it reads MAKHSQHSSPPRKLFDTLNDLWQRAKSEAGLSAEGPEGTRRRNN. Residues 45-65 traverse the membrane as a helical segment; that stretch reads LILYLLLVLSTLYLLNGYQTL. Topologically, residues 66 to 141 are periplasmic; the sequence is RNEEIPYSEF…TVRYGSNWFS (76 aa). Residues 142-162 traverse the membrane as a helical segment; sequence SLIFNWIVPIVLLTLFWTWMA. At 163-637 the chain is on the cytoplasmic side; sequence RRMTGGRGFL…VKAVIREAAS (475 aa). 231–238 contacts ATP; the sequence is GPPGTGKT. Residue His454 coordinates Zn(2+). Glu455 is an active-site residue. Residues His458 and Asp531 each coordinate Zn(2+).

This sequence in the central section; belongs to the AAA ATPase family. The protein in the C-terminal section; belongs to the peptidase M41 family. In terms of assembly, homohexamer. Requires Zn(2+) as cofactor.

It localises to the cell inner membrane. Functionally, acts as a processive, ATP-dependent zinc metallopeptidase for both cytoplasmic and membrane proteins. Plays a role in the quality control of integral membrane proteins. The sequence is that of ATP-dependent zinc metalloprotease FtsH from Methylococcus capsulatus (strain ATCC 33009 / NCIMB 11132 / Bath).